Here is a 1938-residue protein sequence, read N- to C-terminus: Myosin-1 (1938 aa).

Residues 33-82 (DAKTSVFVADPKESFVKATVQSREGGKVTAKTEAGATVTVKEDQVFPMNP) enclose the Myosin N-terminal SH3-like domain. Phosphothreonine occurs at positions 64 and 69. The 696-residue stretch at 86-781 (DKIEDMAMMT…LLGLLEEMRD (696 aa)) folds into the Myosin motor domain. The residue at position 130 (K130) is an N6,N6,N6-trimethyllysine. 179–186 (GESGAGKT) contributes to the ATP binding site. At Y389 the chain carries Phosphotyrosine. T419 carries the phosphothreonine modification. Y424 carries the post-translational modification Phosphotyrosine. S625 is modified (phosphoserine). Positions 658–680 (LNKLMTNLRSTHPHFVRCIIPNE) are actin-binding. At H756 the chain carries Pros-methylhistidine. Positions 760-774 (KFGHTKVFFKAGLLG) are actin-binding. The IQ domain occupies 784-813 (LAQLITRTQARCRGFLARVEYQKMVERRES). Residues 842 to 1938 (LLKSAETEKE…EVHTKIISEE (1097 aa)) adopt a coiled-coil conformation. 2 positions are modified to phosphoserine: S1091 and S1095. Disordered regions lie at residues 1124-1146 (EIEAERASRAKAEKQRSDLSREL) and 1152-1171 (RLEEAGGATSAQIEMNKKRE). A compositionally biased stretch (basic and acidic residues) spans 1127–1146 (AERASRAKAEKQRSDLSREL). S1161 and S1236 each carry phosphoserine. Residue T1240 is modified to Phosphothreonine. A phosphoserine mark is found at S1242 and S1260. Phosphothreonine is present on residues T1264 and T1285. A phosphoserine mark is found at S1287, S1291, S1302, and S1305. Phosphotyrosine is present on Y1463. T1466 is modified (phosphothreonine). S1473 is subject to Phosphoserine. Y1491 carries the post-translational modification Phosphotyrosine. S1494 carries the post-translational modification Phosphoserine. T1500 is modified (phosphothreonine). A Phosphoserine modification is found at S1513. T1516 is subject to Phosphothreonine. Phosphoserine occurs at positions 1541, 1553, 1573, 1599, 1602, 1713, and 1725. Phosphothreonine is present on residues T1729 and T1735.

It belongs to the TRAFAC class myosin-kinesin ATPase superfamily. Myosin family. In terms of assembly, muscle myosin is a hexameric protein that consists of 2 heavy chain subunits (MHC), 2 alkali light chain subunits (MLC) and 2 regulatory light chain subunits (MLC-2). Interacts with SLC26A5.

It is found in the cytoplasm. The protein localises to the myofibril. Required for normal hearing. It plays a role in cochlear amplification of auditory stimuli, likely through the positive regulation of prestin (SLC26A5) activity and outer hair cell (OHC) electromotility. This chain is Myosin-1 (MYH1), found in Bos taurus (Bovine).